Here is a 312-residue protein sequence, read N- to C-terminus: tRNA pseudouridine synthase B (312 aa).

Aspartate 37 (nucleophile) is an active-site residue.

The protein belongs to the pseudouridine synthase TruB family. Type 1 subfamily.

The enzyme catalyses uridine(55) in tRNA = pseudouridine(55) in tRNA. Its function is as follows. Responsible for synthesis of pseudouridine from uracil-55 in the psi GC loop of transfer RNAs. In Deinococcus geothermalis (strain DSM 11300 / CIP 105573 / AG-3a), this protein is tRNA pseudouridine synthase B.